We begin with the raw amino-acid sequence, 215 residues long: L-fuculose phosphate aldolase (215 aa).

Residues 28-29, 43-44, and 71-72 contribute to the substrate site; these read GN, TG, and SS. Glu-73 acts as the Proton donor/acceptor in catalysis. 4 residues coordinate Zn(2+): Glu-73, His-92, His-94, and His-155.

This sequence belongs to the aldolase class II family. AraD/FucA subfamily. As to quaternary structure, homotetramer. Zn(2+) serves as cofactor.

It catalyses the reaction L-fuculose 1-phosphate = (S)-lactaldehyde + dihydroxyacetone phosphate. Its pathway is carbohydrate degradation; L-fucose degradation; L-lactaldehyde and glycerone phosphate from L-fucose: step 3/3. Its function is as follows. Involved in the degradation of L-fucose and D-arabinose. Catalyzes the reversible cleavage of L-fuculose 1-phosphate (Fuc1P) to yield dihydroxyacetone phosphate (DHAP) and L-lactaldehyde. This chain is L-fuculose phosphate aldolase, found in Escherichia coli O6:H1 (strain CFT073 / ATCC 700928 / UPEC).